A 617-amino-acid chain; its full sequence is Chaperone protein DnaK (617 aa).

Threonine 175 is modified (phosphothreonine; by autocatalysis). Positions 578–592 are enriched in low complexity; it reads AGAEAQQGAQGTQGA. Positions 578 to 617 are disordered; sequence AGAEAQQGAQGTQGADMGGNAQGKDDDNVVDADFKVEDDK. The span at 600-617 shows a compositional bias: basic and acidic residues; sequence GKDDDNVVDADFKVEDDK.

Belongs to the heat shock protein 70 family.

Its function is as follows. Acts as a chaperone. This chain is Chaperone protein DnaK, found in Clostridium novyi (strain NT).